The sequence spans 307 residues: N-acetylmuramic acid 6-phosphate etherase (307 aa).

In terms of domain architecture, SIS spans 62–225; sequence IVAAFQKGGR…TTASMIRIGK (164 aa). Glu90 acts as the Proton donor in catalysis. Glu121 is a catalytic residue.

Belongs to the GCKR-like family. MurNAc-6-P etherase subfamily. In terms of assembly, homodimer.

The catalysed reaction is N-acetyl-D-muramate 6-phosphate + H2O = N-acetyl-D-glucosamine 6-phosphate + (R)-lactate. It participates in amino-sugar metabolism; 1,6-anhydro-N-acetylmuramate degradation. The protein operates within amino-sugar metabolism; N-acetylmuramate degradation. Its pathway is cell wall biogenesis; peptidoglycan recycling. Its function is as follows. Specifically catalyzes the cleavage of the D-lactyl ether substituent of MurNAc 6-phosphate, producing GlcNAc 6-phosphate and D-lactate. Together with AnmK, is also required for the utilization of anhydro-N-acetylmuramic acid (anhMurNAc) either imported from the medium or derived from its own cell wall murein, and thus plays a role in cell wall recycling. This chain is N-acetylmuramic acid 6-phosphate etherase, found in Rhizobium rhizogenes (strain K84 / ATCC BAA-868) (Agrobacterium radiobacter).